The primary structure comprises 648 residues: DNA mismatch repair protein MutL (648 aa).

Residues 336-443 form a disordered region; it reads ERPFEPSSPQ…SGSAGESRAR (108 aa). Over residues 370 to 381 the composition is skewed to polar residues; it reads SPESKTHSTWNE. Residues 383–410 are compositionally biased toward basic and acidic residues; sequence SRVDTSRAETSRESRIDSPLGERTRDIA.

This sequence belongs to the DNA mismatch repair MutL/HexB family.

This protein is involved in the repair of mismatches in DNA. It is required for dam-dependent methyl-directed DNA mismatch repair. May act as a 'molecular matchmaker', a protein that promotes the formation of a stable complex between two or more DNA-binding proteins in an ATP-dependent manner without itself being part of a final effector complex. In Shewanella sp. (strain ANA-3), this protein is DNA mismatch repair protein MutL.